Here is a 455-residue protein sequence, read N- to C-terminus: E3 ubiquitin-protein ligase IPI1 (455 aa).

Residues 1–42 (MGAEEEEEPASAVGREGGGGGGGARAAGAGAGGDTADDDDSG) are disordered. Over residues 15–33 (REGGGGGGGARAAGAGAGG) the composition is skewed to gly residues. Residues 51 to 97 (CSICLDAVVAGGGDRSTARLQCGHEFHLDCIGSAFNAKGVMQCPNCR) form an RING-type; atypical zinc finger. 2 disordered regions span residues 286-311 (LDSD…SRIP) and 426-455 (QWIG…IPRM). The segment covering 433 to 442 (SPPPPPPPPA) has biased composition (pro residues).

In terms of assembly, interacts with SPL14/IPA1.

The protein resides in the nucleus. The catalysed reaction is S-ubiquitinyl-[E2 ubiquitin-conjugating enzyme]-L-cysteine + [acceptor protein]-L-lysine = [E2 ubiquitin-conjugating enzyme]-L-cysteine + N(6)-ubiquitinyl-[acceptor protein]-L-lysine.. The protein operates within protein modification; protein ubiquitination. Its function is as follows. Functions as an E3 ligase that promotes polyubiquitination of SPL14/IPA1 for subsequent proteasomal degradation. Regulates plant architecture by modulating SPL14/IPA1 abundance. Promotes the degradation of SPL14/IPA1 in panicles, while it stabilizes SPL14/IPA1 in shoot apices. Ubiquitinates the SPL14/IPA1-mediated complex with 'Lys-48'-linked polyubiquitin in panicles and 'Lys-63'-linked polyubiquitin chains in the shoot apex. The polypeptide is E3 ubiquitin-protein ligase IPI1 (Oryza sativa subsp. japonica (Rice)).